Consider the following 77-residue polypeptide: MPSKKESYESMIKELEKIVSSMENEELPLEEAMKNYEDGVKLCDKLYKILNKAEGKIKLLTENGEEEFKKAGDSYEQ.

It belongs to the XseB family. As to quaternary structure, heterooligomer composed of large and small subunits.

The protein resides in the cytoplasm. The enzyme catalyses Exonucleolytic cleavage in either 5'- to 3'- or 3'- to 5'-direction to yield nucleoside 5'-phosphates.. Functionally, bidirectionally degrades single-stranded DNA into large acid-insoluble oligonucleotides, which are then degraded further into small acid-soluble oligonucleotides. The protein is Exodeoxyribonuclease 7 small subunit of Clostridium acetobutylicum (strain ATCC 824 / DSM 792 / JCM 1419 / IAM 19013 / LMG 5710 / NBRC 13948 / NRRL B-527 / VKM B-1787 / 2291 / W).